Reading from the N-terminus, the 178-residue chain is Interleukin-10 (178 aa).

Residues 1–18 (MPGSALLCCLLLLTGMRI) form the signal peptide. N-linked (GlcNAc...) asparagine glycosylation occurs at Asn-29. 2 disulfide bridges follow: Cys-30/Cys-126 and Cys-80/Cys-132. Residue Asn-134 is glycosylated (N-linked (GlcNAc...) asparagine).

It belongs to the IL-10 family. Homodimer. Interacts with IL10RA and IL10RB.

It is found in the secreted. Its function is as follows. Major immune regulatory cytokine that acts on many cells of the immune system where it has profound anti-inflammatory functions, limiting excessive tissue disruption caused by inflammation. Mechanistically, IL10 binds to its heterotetrameric receptor comprising IL10RA and IL10RB leading to JAK1 and STAT2-mediated phosphorylation of STAT3. In turn, STAT3 translocates to the nucleus where it drives expression of anti-inflammatory mediators. Targets antigen-presenting cells (APCs) such as macrophages and monocytes and inhibits their release of pro-inflammatory cytokines including granulocyte-macrophage colony-stimulating factor /GM-CSF, granulocyte colony-stimulating factor/G-CSF, IL-1 alpha, IL-1 beta, IL-6, IL-8 and TNF-alpha. Also interferes with antigen presentation by reducing the expression of MHC-class II and co-stimulatory molecules, thereby inhibiting their ability to induce T cell activation. In addition, controls the inflammatory response of macrophages by reprogramming essential metabolic pathways including mTOR signaling. This Mus musculus (Mouse) protein is Interleukin-10 (Il10).